The chain runs to 160 residues: ATP synthase subunit delta, mitochondrial (160 aa).

The transit peptide at 1-22 (MLRSIIGKSASRSLNFVAKRSY) directs the protein to the mitochondrion.

The protein belongs to the ATPase epsilon chain family. As to quaternary structure, F-type ATPases have 2 components, CF(1) - the catalytic core - and CF(0) - the membrane proton channel. CF(1) has five subunits: alpha(3), beta(3), gamma(1), delta(1), epsilon(1). CF(0) has three main subunits: a, b and c.

Its subcellular location is the mitochondrion. The protein resides in the mitochondrion inner membrane. Its function is as follows. Mitochondrial membrane ATP synthase (F(1)F(0) ATP synthase or Complex V) produces ATP from ADP in the presence of a proton gradient across the membrane which is generated by electron transport complexes of the respiratory chain. F-type ATPases consist of two structural domains, F(1) - containing the extramembraneous catalytic core, and F(0) - containing the membrane proton channel, linked together by a central stalk and a peripheral stalk. During catalysis, ATP turnover in the catalytic domain of F(1) is coupled via a rotary mechanism of the central stalk subunits to proton translocation. Part of the complex F(1) domain and of the central stalk which is part of the complex rotary element. Rotation of the central stalk against the surrounding alpha(3)beta(3) subunits leads to hydrolysis of ATP in three separate catalytic sites on the beta subunits. In Saccharomyces cerevisiae (strain ATCC 204508 / S288c) (Baker's yeast), this protein is ATP synthase subunit delta, mitochondrial (ATP16).